Consider the following 330-residue polypeptide: CRISPR-associated endonuclease Cas1 2 (330 aa).

Mn(2+) contacts are provided by E156, H222, and E237.

It belongs to the CRISPR-associated endonuclease Cas1 family. As to quaternary structure, homodimer, forms a heterotetramer with a Cas2 homodimer. Requires Mg(2+) as cofactor. It depends on Mn(2+) as a cofactor.

In terms of biological role, CRISPR (clustered regularly interspaced short palindromic repeat), is an adaptive immune system that provides protection against mobile genetic elements (viruses, transposable elements and conjugative plasmids). CRISPR clusters contain spacers, sequences complementary to antecedent mobile elements, and target invading nucleic acids. CRISPR clusters are transcribed and processed into CRISPR RNA (crRNA). Acts as a dsDNA endonuclease. Involved in the integration of spacer DNA into the CRISPR cassette. This chain is CRISPR-associated endonuclease Cas1 2, found in Thermodesulfovibrio yellowstonii (strain ATCC 51303 / DSM 11347 / YP87).